We begin with the raw amino-acid sequence, 238 residues long: Flagellar L-ring protein (238 aa).

An N-terminal signal peptide occupies residues 1–16 (MRKLILISLCIFFLAS). C17 is lipidated: N-palmitoyl cysteine. Residue C17 is the site of S-diacylglycerol cysteine attachment.

It belongs to the FlgH family. The basal body constitutes a major portion of the flagellar organelle and consists of four rings (L,P,S, and M) mounted on a central rod.

It is found in the cell outer membrane. The protein localises to the bacterial flagellum basal body. Assembles around the rod to form the L-ring and probably protects the motor/basal body from shearing forces during rotation. This chain is Flagellar L-ring protein, found in Thermodesulfovibrio yellowstonii (strain ATCC 51303 / DSM 11347 / YP87).